A 60-amino-acid polypeptide reads, in one-letter code: Ferredoxin (60 aa).

4Fe-4S ferredoxin-type domains are found at residues 2-30 (VTID…EIQG) and 31-60 (DKVV…TVKE). [4Fe-4S] cluster-binding residues include C9, C14, C17, C21, C41, C44, C47, and C51.

Requires [4Fe-4S] cluster as cofactor.

In terms of biological role, ferredoxins are iron-sulfur proteins that transfer electrons probably in the CO-dehydrogenase complex. In Methanothermococcus thermolithotrophicus (Methanococcus thermolithotrophicus), this protein is Ferredoxin.